The chain runs to 366 residues: ABI gene family member 3 (366 aa).

Residues 33–61 (CEDNYVQATDKRKALEETMAFTTQALASV) are a coiled coil. The interval 161-195 (SRTGTLSRKSIKAPATPASATLGRPPRIPEPVHLP) is disordered. Phosphoserine occurs at positions 213 and 216. The disordered stretch occupies residues 215-302 (GSAEGVGGAP…PPPGFGPDEP (88 aa)). Positions 232–248 (PPAPPLPSSLDPPPPPA) are enriched in pro residues. Residues 308–366 (SYLEKVVTLYPYTSQKDNELSFSEGTVICVTRRYSDGWCEGVSSEGTGFFPGNYVEPSC) form the SH3 domain. Ser342 bears the Phosphoserine mark.

Belongs to the ABI family. May interact with PAK1 and PAK2. Probably interacts with TARSH. Expressed in heart, lung, liver, pancreas, kidney, placenta and at low levels in brain and skeletal muscle.

Its subcellular location is the cytoplasm. May inhibit tumor metastasis. In vitro, reduces cell motility. In Homo sapiens (Human), this protein is ABI gene family member 3 (ABI3).